We begin with the raw amino-acid sequence, 98 residues long: Small ribosomal subunit protein uS17 (98 aa).

A disordered region spans residues methionine 1–lysine 21. Residue lysine 96 forms an Isoglutamyl lysine isopeptide (Lys-Gln) (interchain with Q-Cter in protein Pup) linkage.

This sequence belongs to the universal ribosomal protein uS17 family. Part of the 30S ribosomal subunit.

One of the primary rRNA binding proteins, it binds specifically to the 5'-end of 16S ribosomal RNA. In Mycolicibacterium smegmatis (strain ATCC 700084 / mc(2)155) (Mycobacterium smegmatis), this protein is Small ribosomal subunit protein uS17 (rpsQ).